Consider the following 115-residue polypeptide: MRIYVNEIKIKDDGIYCYSEDPTDGLVEVGQMLVDSDNYGFAYLLDDGQSYDYLIFVQETWSMLHENRGKKLIVNDDLVLEHFQEELDYILENVEGNNNYGKEFVSAVEETFDLK.

It belongs to the UPF0738 family.

The protein is UPF0738 protein SH1953 of Staphylococcus haemolyticus (strain JCSC1435).